We begin with the raw amino-acid sequence, 588 residues long: Adenine deaminase (588 aa).

This sequence belongs to the metallo-dependent hydrolases superfamily. Adenine deaminase family. As to quaternary structure, homodimer. The cofactor is Mn(2+).

The enzyme catalyses adenine + H2O + H(+) = hypoxanthine + NH4(+). In Escherichia coli (strain K12 / DH10B), this protein is Adenine deaminase.